A 354-amino-acid chain; its full sequence is Uroporphyrinogen decarboxylase (354 aa).

Substrate contacts are provided by residues 27–31 (RQAGR), Asp-77, Tyr-154, Thr-209, and His-327.

It belongs to the uroporphyrinogen decarboxylase family. As to quaternary structure, homodimer.

It is found in the cytoplasm. It carries out the reaction uroporphyrinogen III + 4 H(+) = coproporphyrinogen III + 4 CO2. The protein operates within porphyrin-containing compound metabolism; protoporphyrin-IX biosynthesis; coproporphyrinogen-III from 5-aminolevulinate: step 4/4. Its function is as follows. Catalyzes the decarboxylation of four acetate groups of uroporphyrinogen-III to yield coproporphyrinogen-III. The chain is Uroporphyrinogen decarboxylase from Salmonella schwarzengrund (strain CVM19633).